Reading from the N-terminus, the 283-residue chain is Putative S-adenosyl-L-methionine-dependent methyltransferase SCO7813 (283 aa).

S-adenosyl-L-methionine is bound by residues aspartate 121 and 150–151 (DL). The segment at 264–283 (MSTLPQHEDGPGGLISAVRR) is disordered.

This sequence belongs to the UPF0677 family.

In terms of biological role, exhibits S-adenosyl-L-methionine-dependent methyltransferase activity. The polypeptide is Putative S-adenosyl-L-methionine-dependent methyltransferase SCO7813 (Streptomyces coelicolor (strain ATCC BAA-471 / A3(2) / M145)).